The primary structure comprises 699 residues: Extracellular matrix protein 2 (699 aa).

Positions 1-20 (MKIAVLFCFFLLIIFQTDFG) are cleaved as a signal peptide. The 58-residue stretch at 101 to 158 (GHCLVKGITMYNKAVWSPEPCTTCLCSDGRVLCDETMCHPQRCPQTVIPEGECCPVCS) folds into the VWFC domain. Over residues 176 to 186 (EFSGDSSEQRE) the composition is skewed to basic and acidic residues. The disordered stretch occupies residues 176 to 316 (EFSGDSSEQR…PAPPRGTLRL (141 aa)). Residues 212-224 (QSEEDEEVKEEDT) are compositionally biased toward acidic residues. The span at 243–260 (GDSRGGDRKQRPGEERRL) shows a compositional bias: basic and acidic residues. A compositionally biased stretch (acidic residues) spans 270 to 291 (EEEEDEEEEGEEGEEDEEDEED). A Cell attachment site motif is present at residues 294–296 (RGD). The region spanning 307 to 344 (PAPPRGTLRLPSGCSLSYRTISCINAMLTQIPPLTAPQ) is the LRRNT domain. LRR repeat units follow at residues 368 to 388 (NLER…GPKA), 394 to 415 (KLMR…LPST), 416 to 436 (LEEL…SLSD), 439 to 459 (QLVT…NPLA), 465 to 484 (SLAY…QGLP), 486 to 507 (SIEE…CFNH), 510 to 530 (KINV…APLA), 536 to 557 (NLES…LPKS), 558 to 578 (LLHL…VFGH), 582 to 602 (GLEY…DRVS), 609 to 630 (SLRE…IQEM), 632 to 653 (ALHF…EICN), and 661 to 684 (NLEH…TFSC). Residue Asn378 is glycosylated (N-linked (GlcNAc...) asparagine). Asn449 carries N-linked (GlcNAc...) asparagine glycosylation. Asn506 is a glycosylation site (N-linked (GlcNAc...) asparagine).

This sequence belongs to the small leucine-rich proteoglycan (SLRP) family. SLRP class I subfamily. As to quaternary structure, interacts with numerous extracellular matrix proteins. Interacts with MSL1 and RASSF1. In terms of tissue distribution, expressed predominantly in adipose tissue as well as female-specific organs such as mammary gland, ovary, and uterus.

It is found in the secreted. The protein localises to the extracellular space. Its subcellular location is the extracellular matrix. Its function is as follows. Promotes matrix assembly and cell adhesiveness. The polypeptide is Extracellular matrix protein 2 (ECM2) (Homo sapiens (Human)).